An 86-amino-acid chain; its full sequence is Toxin Tpa5 (86 aa).

The signal sequence occupies residues 1–20; that stretch reads MSIFPIALALLLIGLEEGEA. Residues 22–85 enclose the LCN-type CS-alpha/beta domain; that stretch reads RDGYPISKNN…WGDPGTPPCM (64 aa). Cystine bridges form between cysteine 33–cysteine 84, cysteine 37–cysteine 58, cysteine 43–cysteine 64, and cysteine 47–cysteine 66.

It belongs to the long (4 C-C) scorpion toxin superfamily. Sodium channel inhibitor family. Beta subfamily. Expressed by the venom gland.

The protein resides in the secreted. Beta toxins bind voltage-independently at site-4 of sodium channels (Nav) and shift the voltage of activation toward more negative potentials thereby affecting sodium channel activation and promoting spontaneous and repetitive firing. The protein is Toxin Tpa5 of Tityus pachyurus (Colombian scorpion).